The primary structure comprises 425 residues: Serine--tRNA ligase (425 aa).

L-serine is bound at residue 230–232 (TAE). 261-263 (RAE) contacts ATP. Glu284 is a binding site for L-serine. 348–351 (EISS) is a binding site for ATP. An L-serine-binding site is contributed by Ser384.

This sequence belongs to the class-II aminoacyl-tRNA synthetase family. Type-1 seryl-tRNA synthetase subfamily. As to quaternary structure, homodimer. The tRNA molecule binds across the dimer.

The protein resides in the cytoplasm. The catalysed reaction is tRNA(Ser) + L-serine + ATP = L-seryl-tRNA(Ser) + AMP + diphosphate + H(+). The enzyme catalyses tRNA(Sec) + L-serine + ATP = L-seryl-tRNA(Sec) + AMP + diphosphate + H(+). The protein operates within aminoacyl-tRNA biosynthesis; selenocysteinyl-tRNA(Sec) biosynthesis; L-seryl-tRNA(Sec) from L-serine and tRNA(Sec): step 1/1. Its function is as follows. Catalyzes the attachment of serine to tRNA(Ser). Is also able to aminoacylate tRNA(Sec) with serine, to form the misacylated tRNA L-seryl-tRNA(Sec), which will be further converted into selenocysteinyl-tRNA(Sec). In Desulforudis audaxviator (strain MP104C), this protein is Serine--tRNA ligase.